The sequence spans 162 residues: uncharacterized protein (162 aa).

Belongs to the A.longa ORF167/ORF288 family.

Its subcellular location is the plastid. This is an uncharacterized protein from Euglena longa (Euglenophycean alga).